A 566-amino-acid polypeptide reads, in one-letter code: 2-isopropylmalate synthase (566 aa).

The Pyruvate carboxyltransferase domain maps to 32–306; it reads PLWCAVDLRD…DPQIDFSNID (275 aa). Mg(2+) is bound by residues Asp-41, His-245, His-247, and Asn-281. Residues 451-566 are regulatory domain; sequence PVRPLERIKQ…VVSAINRASR (116 aa).

The protein belongs to the alpha-IPM synthase/homocitrate synthase family. LeuA type 2 subfamily. In terms of assembly, homodimer. Mg(2+) is required as a cofactor.

It localises to the cytoplasm. It catalyses the reaction 3-methyl-2-oxobutanoate + acetyl-CoA + H2O = (2S)-2-isopropylmalate + CoA + H(+). It participates in amino-acid biosynthesis; L-leucine biosynthesis; L-leucine from 3-methyl-2-oxobutanoate: step 1/4. Catalyzes the condensation of the acetyl group of acetyl-CoA with 3-methyl-2-oxobutanoate (2-ketoisovalerate) to form 3-carboxy-3-hydroxy-4-methylpentanoate (2-isopropylmalate). The sequence is that of 2-isopropylmalate synthase from Mycobacterium ulcerans (strain Agy99).